A 250-amino-acid polypeptide reads, in one-letter code: Aquaporin TIP1-1 (250 aa).

Transmembrane regions (helical) follow at residues 24 to 44 (FAEF…GMAF) and 56 to 76 (AGLI…VSVG). The NPA 1 signature appears at 85–87 (NPA). 3 helical membrane passes run 104-126 (LLYW…FSTG), 143-163 (ALVL…ATAV), and 172-192 (TIAP…GGAF). The short motif at 198-200 (NPA) is the NPA 2 element. A helical transmembrane segment spans residues 218–238 (YWVGPLIGGGLAGVIYELLFI).

This sequence belongs to the MIP/aquaporin (TC 1.A.8) family. TIP (TC 1.A.8.10) subfamily. In terms of tissue distribution, expressed in roots, shoots, leaves, tassels, ears and embryos. Expressed in meristems and zones of cell enlargement: tips of primary and lateral roots, leaf primordia, and male and female inflorescence meristems. Highly expressed in the root epidermis and endodermis, parenchyma cells surrounding mature xylem vessels in the root and the stem, phloem companion cells and a ring of cells around the phloem strand in the stem and the leaf sheath, and the basal endosperm transfer cells in developing kernels.

It localises to the vacuole membrane. Water channel required to facilitate the transport of water across cell membrane. May support the rapid influx of water into vacuoles during cell expansion, permit osmotic equilibration between the cytosol and the vacuolar content and rapid transcellular water flow through living cells. Its function is impaired by Hg(2+). The chain is Aquaporin TIP1-1 (TIP1-1) from Zea mays (Maize).